The sequence spans 1484 residues: Ral GTPase-activating protein subunit beta (1484 aa).

Disordered stretches follow at residues 355 to 437 (PRSD…APRR) and 697 to 728 (GGENNLKSHSRTNSGISSASGGSTEPTTPDSE). Ser359 is modified (phosphoserine). 2 positions are modified to phosphothreonine: Thr363 and Thr379. Composition is skewed to polar residues over residues 369–381 (SMPQSAAVNTTPP), 392–428 (NKATMKTSTVTTAHTSKVQHQASSTSPLSSPNQTSSE), and 701–725 (NLKSHSRTNSGISSASGGSTEPTTP). A phosphoserine mark is found at Ser421 and Ser710. Position 724 is a phosphothreonine (Thr724). The region spanning 1138 to 1382 (IGYLDLLPCR…TTLEKEVPVI (245 aa)) is the Rap-GAP domain. At Ser1275 the chain carries Phosphoserine. Residues 1301–1325 (DSLNSSQRLSPSSRMKKLPQGRPVP) are disordered. A compositionally biased stretch (low complexity) spans 1302–1313 (SLNSSQRLSPSS).

In terms of assembly, component of the heterodimeric RalGAP1 complex with RALGAPA1 and of the heterodimeric RalGAP2 complex with RALGAPA2. Heterodimerization is required for activity. Detected in brain, thymus, lung, heart, spleen, liver and testis (at protein level).

Functionally, non-catalytic subunit of the heterodimeric RalGAP1 and RalGAP2 complexes which act as GTPase activators for the Ras-like small GTPases RALA and RALB. The polypeptide is Ral GTPase-activating protein subunit beta (Rattus norvegicus (Rat)).